Here is a 280-residue protein sequence, read N- to C-terminus: Shikimate kinase (280 aa).

Residue 86-96 (PPGVGLKGSAA) coordinates ATP.

This sequence belongs to the GHMP kinase family. Archaeal shikimate kinase subfamily.

The protein localises to the cytoplasm. It carries out the reaction shikimate + ATP = 3-phosphoshikimate + ADP + H(+). Its pathway is metabolic intermediate biosynthesis; chorismate biosynthesis; chorismate from D-erythrose 4-phosphate and phosphoenolpyruvate: step 5/7. The sequence is that of Shikimate kinase (aroK) from Aeropyrum pernix (strain ATCC 700893 / DSM 11879 / JCM 9820 / NBRC 100138 / K1).